The primary structure comprises 264 residues: Acyl-[acyl-carrier-protein]--UDP-N-acetylglucosamine O-acyltransferase (264 aa).

This sequence belongs to the transferase hexapeptide repeat family. LpxA subfamily. In terms of assembly, homotrimer.

The protein resides in the cytoplasm. The catalysed reaction is a (3R)-hydroxyacyl-[ACP] + UDP-N-acetyl-alpha-D-glucosamine = a UDP-3-O-[(3R)-3-hydroxyacyl]-N-acetyl-alpha-D-glucosamine + holo-[ACP]. Its pathway is glycolipid biosynthesis; lipid IV(A) biosynthesis; lipid IV(A) from (3R)-3-hydroxytetradecanoyl-[acyl-carrier-protein] and UDP-N-acetyl-alpha-D-glucosamine: step 1/6. In terms of biological role, involved in the biosynthesis of lipid A, a phosphorylated glycolipid that anchors the lipopolysaccharide to the outer membrane of the cell. This chain is Acyl-[acyl-carrier-protein]--UDP-N-acetylglucosamine O-acyltransferase, found in Chlorobium phaeobacteroides (strain DSM 266 / SMG 266 / 2430).